The primary structure comprises 134 residues: RxLR effector protein 4 (134 aa).

Positions 1–22 (MRSLFYIAVAVAVFARSSAVAA) are cleaved as a signal peptide. Positions 43-65 (AMASSDSRKRFLRATDPEDGDLQ) are disordered. Residues 48 to 58 (DSRKRFLRATD) show a composition bias toward basic and acidic residues. Positions 52–71 (RFLRATDPEDGDLQADDEER) match the RxLR-dEER motif.

The protein belongs to the RxLR effector family.

Its subcellular location is the secreted. Its function is as follows. Effector that enhances plant susceptibility to P.parasitica in Nicotiana benthamiana and Arabidopsis thaliana. Triggers non-specific cell death in a variety of plants, including tobacco, tomato, potato and A.thaliana. E4-induced cell death is dependent on HSP90, NPK and SGT1, suggesting that PpE4 is recognized by the plant immune system. The polypeptide is RxLR effector protein 4 (Phytophthora nicotianae (strain INRA-310) (Phytophthora parasitica)).